Reading from the N-terminus, the 150-residue chain is Cytochrome c oxidase subunit 5A, mitochondrial (150 aa).

The N-terminal 41 residues, 1–41 (MLGAALRRCAVAATTRAGPRGLLHSARTPGPAAAIQSVRCX), are a transit peptide targeting the mitochondrion. The short motif at 2–17 (LGAALRRCAVAATTRA) is the SIFI-degron element. 2 positions are modified to N6-acetyllysine: K87 and K113. T141 carries the phosphothreonine modification.

This sequence belongs to the cytochrome c oxidase subunit 5A family. Component of the cytochrome c oxidase (complex IV, CIV), a multisubunit enzyme composed of 14 subunits. The complex is composed of a catalytic core of 3 subunits MT-CO1, MT-CO2 and MT-CO3, encoded in the mitochondrial DNA, and 11 supernumerary subunits COX4I, COX5A, COX5B, COX6A, COX6B, COX6C, COX7A, COX7B, COX7C, COX8 and NDUFA4, which are encoded in the nuclear genome. The complex exists as a monomer or a dimer and forms supercomplexes (SCs) in the inner mitochondrial membrane with NADH-ubiquinone oxidoreductase (complex I, CI) and ubiquinol-cytochrome c oxidoreductase (cytochrome b-c1 complex, complex III, CIII), resulting in different assemblies (supercomplex SCI(1)III(2)IV(1) and megacomplex MCI(2)III(2)IV(2)). Interacts with AFG1L. Interacts with RAB5IF. In terms of processing, in response to mitochondrial stress, the precursor protein is ubiquitinated by the SIFI complex in the cytoplasm before mitochondrial import, leading to its degradation. Within the SIFI complex, UBR4 initiates ubiquitin chain that are further elongated or branched by KCMF1.

It localises to the mitochondrion inner membrane. The protein operates within energy metabolism; oxidative phosphorylation. Component of the cytochrome c oxidase, the last enzyme in the mitochondrial electron transport chain which drives oxidative phosphorylation. The respiratory chain contains 3 multisubunit complexes succinate dehydrogenase (complex II, CII), ubiquinol-cytochrome c oxidoreductase (cytochrome b-c1 complex, complex III, CIII) and cytochrome c oxidase (complex IV, CIV), that cooperate to transfer electrons derived from NADH and succinate to molecular oxygen, creating an electrochemical gradient over the inner membrane that drives transmembrane transport and the ATP synthase. Cytochrome c oxidase is the component of the respiratory chain that catalyzes the reduction of oxygen to water. Electrons originating from reduced cytochrome c in the intermembrane space (IMS) are transferred via the dinuclear copper A center (CU(A)) of subunit 2 and heme A of subunit 1 to the active site in subunit 1, a binuclear center (BNC) formed by heme A3 and copper B (CU(B)). The BNC reduces molecular oxygen to 2 water molecules using 4 electrons from cytochrome c in the IMS and 4 protons from the mitochondrial matrix. The polypeptide is Cytochrome c oxidase subunit 5A, mitochondrial (COX5A) (Pan paniscus (Pygmy chimpanzee)).